The sequence spans 479 residues: MAHFNQNFLDSIERDLPSHLSMEDFIAYSNKPLRLSIRVNTLKISTENFIDLMSAKGWSFDPIPWCNQGFWVTISSDLQLGNTIEHLQGLFYIQEASSMLPPTALFDSHADNENDLSQFAQTRVLDMASAPGSKTTQIAALMNNQGLLVANEYSASRVKVLHANVARMGVSNCALTHFDARVFGEYLFETFDSVLLDAPCSGEGTIRKDPDALKNWDNNDNKGIVDTQKALIESAFLALKVGGCLVYSTCALSRQENQDVCHHLKTAFGEAVEFAALTELFPDADKACTEEGFLHVWPQIYDSEGFFVAKIRKVSAVERTLPEPKMQKNFPFTAAKTKQIEELTAYFEDSFAITLPTDAEIMVRDLEFWLFPKAVMPLIGKMRFQRIGIKLADALKKGYKVRHEAILALSSPTRFELSDEQAKEFLMGRDISLVEKVKPQGEVIVSYASNPLGVAKHLGNKLKNNLPRDLVKDKIALYQ.

Residues 128–134 (ASAPGSK), E152, D179, and D197 each bind S-adenosyl-L-methionine. C250 functions as the Nucleophile in the catalytic mechanism.

Belongs to the class I-like SAM-binding methyltransferase superfamily. RsmB/NOP family.

The protein localises to the cytoplasm. It carries out the reaction cytidine(1407) in 16S rRNA + S-adenosyl-L-methionine = 5-methylcytidine(1407) in 16S rRNA + S-adenosyl-L-homocysteine + H(+). Specifically methylates the cytosine at position 1407 (m5C1407) of 16S rRNA. The polypeptide is Ribosomal RNA small subunit methyltransferase F (Shewanella halifaxensis (strain HAW-EB4)).